An 82-amino-acid polypeptide reads, in one-letter code: Sec-independent protein translocase protein TatA (82 aa).

A helical transmembrane segment spans residues Met1 to Gly21. Positions Asp46–Ala82 are disordered.

Belongs to the TatA/E family. In terms of assembly, the Tat system comprises two distinct complexes: a TatABC complex, containing multiple copies of TatA, TatB and TatC subunits, and a separate TatA complex, containing only TatA subunits. Substrates initially bind to the TatABC complex, which probably triggers association of the separate TatA complex to form the active translocon.

The protein resides in the cell inner membrane. Its function is as follows. Part of the twin-arginine translocation (Tat) system that transports large folded proteins containing a characteristic twin-arginine motif in their signal peptide across membranes. TatA could form the protein-conducting channel of the Tat system. This Aliivibrio fischeri (strain MJ11) (Vibrio fischeri) protein is Sec-independent protein translocase protein TatA.